Reading from the N-terminus, the 258-residue chain is 14-3-3 protein homolog (258 aa).

Belongs to the 14-3-3 family.

The chain is 14-3-3 protein homolog from Encephalitozoon cuniculi (strain GB-M1) (Microsporidian parasite).